The primary structure comprises 339 residues: MARPKVYVTRIIPEPGLSMLKECCDVVVHESKDWPPSREELLRNIRDKDALLCLLTDKIDAEVMDAAPNLKVISTYSVGFDHIDIPEATKRGIYVTHTPGVLTDAVAEFTVGLILAVTRRIVEADKIIRTGQWDKPWNPYFLTGPELKGKTIGLVGLGRIGVATAKRLSSFDVKILYYDIERRWDVETVIPNMEFTDLDTLLEKSDIVSIHVPLTKETYHLINEERLRKMKKTAYLINTARGPVVDTEALVKALKEGWIAGAALDVFEQEPLPPNHPLTKFDNVVLAPHIASATIEARQRMAELAARNLIAVLKGEMPPALVNKEVLKVRPLEKVKMIP.

NADP(+)-binding positions include 157–160 and 239–241; these read LGRI and TAR. Catalysis depends on residues Arg-241 and Glu-270. The active-site Proton donor is His-289. 289-291 contacts NADP(+); it reads HIA.

The protein belongs to the D-isomer specific 2-hydroxyacid dehydrogenase family. GyaR subfamily. As to quaternary structure, homodimer.

It is found in the cytoplasm. It carries out the reaction glycolate + NAD(+) = glyoxylate + NADH + H(+). The protein is Glyoxylate reductase of Thermofilum pendens (strain DSM 2475 / Hrk 5).